Reading from the N-terminus, the 443-residue chain is Trimethylamine monooxygenase (443 aa).

FAD is bound by residues D37, Q39, L45, and W46. Positions 70 and 72 each coordinate NADP(+). FAD contacts are provided by N72 and V125. NADP(+) contacts are provided by Y170, S202, S203, S205, and R226. FAD-binding residues include Q315 and T318. Position 409 (R409) interacts with NADP(+).

This sequence belongs to the FMO family. FAD is required as a cofactor.

It carries out the reaction trimethylamine + NADPH + O2 = trimethylamine N-oxide + NADP(+) + H2O. In terms of biological role, catalyzes the oxidation of trimethylamine (TMA) to produce trimethylamine N-oxide (TMAO). In vitro, has a broad substrate specificity, oxidizing many nitrogen- and sulfur-containing compounds, including dimethylamine (DMA), dimethylsulfide (DMS) and dimethylsulfoxide (DMSO). In Pelagibacter ubique (strain HTCC1002), this protein is Trimethylamine monooxygenase.